Consider the following 77-residue polypeptide: Translation initiation factor IF-1, chloroplastic (77 aa).

The region spanning 1–71 (MKEQKWIHEG…TRGRIIYRLR (71 aa)) is the S1-like domain.

It belongs to the IF-1 family. Component of the 30S ribosomal translation pre-initiation complex which assembles on the 30S ribosome in the order IF-2 and IF-3, IF-1 and N-formylmethionyl-tRNA(fMet); mRNA recruitment can occur at any time during PIC assembly.

Its subcellular location is the plastid. It localises to the chloroplast. One of the essential components for the initiation of protein synthesis. Stabilizes the binding of IF-2 and IF-3 on the 30S subunit to which N-formylmethionyl-tRNA(fMet) subsequently binds. Helps modulate mRNA selection, yielding the 30S pre-initiation complex (PIC). Upon addition of the 50S ribosomal subunit IF-1, IF-2 and IF-3 are released leaving the mature 70S translation initiation complex. This Hedera helix (English ivy) protein is Translation initiation factor IF-1, chloroplastic.